The primary structure comprises 374 residues: Histidinol-phosphate aminotransferase (374 aa).

Residue Lys-211 is modified to N6-(pyridoxal phosphate)lysine. Residues 351 to 368 are compositionally biased toward low complexity; the sequence is GNSSQDSASKSNSSANND. The interval 351-374 is disordered; that stretch reads GNSSQDSASKSNSSANNDELNASN.

This sequence belongs to the class-II pyridoxal-phosphate-dependent aminotransferase family. Histidinol-phosphate aminotransferase subfamily. Homodimer. Pyridoxal 5'-phosphate serves as cofactor.

It catalyses the reaction L-histidinol phosphate + 2-oxoglutarate = 3-(imidazol-4-yl)-2-oxopropyl phosphate + L-glutamate. It participates in amino-acid biosynthesis; L-histidine biosynthesis; L-histidine from 5-phospho-alpha-D-ribose 1-diphosphate: step 7/9. The protein is Histidinol-phosphate aminotransferase of Photobacterium profundum (strain SS9).